The following is a 406-amino-acid chain: Phosphopentomutase (406 aa).

6 residues coordinate Mn(2+): aspartate 10, aspartate 305, histidine 310, aspartate 346, histidine 347, and histidine 358.

Belongs to the phosphopentomutase family. Requires Mn(2+) as cofactor.

It localises to the cytoplasm. It catalyses the reaction 2-deoxy-alpha-D-ribose 1-phosphate = 2-deoxy-D-ribose 5-phosphate. It carries out the reaction alpha-D-ribose 1-phosphate = D-ribose 5-phosphate. It participates in carbohydrate degradation; 2-deoxy-D-ribose 1-phosphate degradation; D-glyceraldehyde 3-phosphate and acetaldehyde from 2-deoxy-alpha-D-ribose 1-phosphate: step 1/2. In terms of biological role, isomerase that catalyzes the conversion of deoxy-ribose 1-phosphate (dRib-1-P) and ribose 1-phosphate (Rib-1-P) to deoxy-ribose 5-phosphate (dRib-5-P) and ribose 5-phosphate (Rib-5-P), respectively. The polypeptide is Phosphopentomutase (Rhizobium meliloti (strain 1021) (Ensifer meliloti)).